The sequence spans 324 residues: Proto-oncogene Mas (324 aa).

The Extracellular portion of the chain corresponds to 1–35 (MDQSNMTSLAEEKAMNTSSRNASLGSSHPPIPIVH). 3 N-linked (GlcNAc...) asparagine glycosylation sites follow: asparagine 5, asparagine 16, and asparagine 21. Residues 36–60 (WVIMSISPLGFVENGILLWFLCFRM) form a helical membrane-spanning segment. The Cytoplasmic segment spans residues 61–64 (RRNP). The chain crosses the membrane as a helical span at residues 65-86 (FTVYITHLSIADISLLFCIFIL). Residues 87–103 (SIDYALDYELSSGHHYT) lie on the Extracellular side of the membrane. A helical transmembrane segment spans residues 104–127 (IVTLSVTFLFGYNTGLYLLTAISV). Over 128-148 (ERCLSVLYPIWYRCHRPKHQS) the chain is Cytoplasmic. A helical transmembrane segment spans residues 149 to 171 (AFVCALLWALSCLVTTMEYVMCI). The Extracellular portion of the chain corresponds to 172–184 (DSGEESHSRSDCR). The chain crosses the membrane as a helical span at residues 185–205 (AVIIFIAILSFLVFTPLMLVS). The Cytoplasmic segment spans residues 206 to 223 (STILVVKIRKNTWASHSS). Residues 224-244 (KLYIVIMVTIIIFLIFAMPMR) form a helical membrane-spanning segment. Topologically, residues 245–262 (VLYLLYYEYWSAFGNLHN) are extracellular. Residues 263 to 283 (ISLLFSTINSSANPFIYFFVG) form a helical membrane-spanning segment. Residues 284–324 (SSKKKRFRESLKVVLTRAFKDEMQPRRQEGNGNTVSIETVV) are Cytoplasmic-facing.

The protein belongs to the G-protein coupled receptor 1 family. Interacts with AGTR1. Interacts with FLNA (via filamin repeat 21); increases PKA-mediated phosphorylation of FLNA.

Its subcellular location is the cell membrane. In terms of biological role, acts specifically as a functional antagonist of AGTR1 (angiotensin-2 type 1 receptor), although it up-regulates AGTR1 receptor levels. Positive regulation of AGTR1 levels occurs through activation of the G-proteins GNA11 and GNAQ, and stimulation of the protein kinase C signaling cascade. The antagonist effect on AGTR1 function is probably due to AGTR1 being physically altered by MAS1. Receptor for angiotensin 1-7. The sequence is that of Proto-oncogene Mas (Mas1) from Mus musculus (Mouse).